The sequence spans 370 residues: tRNA (guanine(9)-/adenine(9)-N1)-methyltransferase (370 aa).

Residues 87 to 292 form the SAM-dependent MTase TRM10-type domain; it reads TPEELREKLP…KELPKRATRY (206 aa).

Belongs to the class IV-like SAM-binding methyltransferase superfamily. TRM10 family.

The protein localises to the cytoplasm. It catalyses the reaction adenosine(9) in tRNA + S-adenosyl-L-methionine = N(1)-methyladenosine(9) in tRNA + S-adenosyl-L-homocysteine + H(+). The enzyme catalyses guanosine(9) in tRNA + S-adenosyl-L-methionine = N(1)-methylguanosine(9) in tRNA + S-adenosyl-L-homocysteine + H(+). Functionally, catalyzes the S-adenosyl-L-methionine-dependent formation of either N(1)-methyladenine or N(1)-methylguanine at position 9 (m1A9 or m1G9) in tRNA. The sequence is that of tRNA (guanine(9)-/adenine(9)-N1)-methyltransferase from Thermococcus kodakarensis (strain ATCC BAA-918 / JCM 12380 / KOD1) (Pyrococcus kodakaraensis (strain KOD1)).